A 199-amino-acid polypeptide reads, in one-letter code: Interleukin-11 (199 aa).

Residues 1-21 (MNCVCRLVLVVLSLWPDRVVA) form the signal peptide. Residues 182–190 (HLTLDWAVR) form an important for interaction with IL11RA and for the stimulation of cell proliferation region.

The protein belongs to the IL-6 superfamily. Interacts with either IL11RA1 or IL11RA2 to associate with IL6ST, giving rise to a multimeric signaling complex.

The protein resides in the secreted. Cytokine that stimulates the proliferation of hematopoietic stem cells and megakaryocyte progenitor cells and induces megakaryocyte maturation resulting in increased platelet production. Also promotes the proliferation of hepatocytes in response to liver damage. Binding to its receptor formed by IL6ST and either IL11RA1 or IL11RA2 activates a signaling cascade that promotes cell proliferation, also in the context of various cancers. Signaling leads to the activation of intracellular protein kinases and the phosphorylation of STAT3. The interaction with the membrane-bound IL11RA and IL6ST stimulates 'classic signaling', whereas the binding of IL11 and soluble IL11RA to IL6ST stimulates 'trans-signaling'. The chain is Interleukin-11 from Mus musculus (Mouse).